Here is a 668-residue protein sequence, read N- to C-terminus: Packaging protein UL32 homolog (668 aa).

Residues 1-10 show a composition bias toward polar residues; sequence MNPSTHVSSN. The segment at 1-35 is disordered; that stretch reads MNPSTHVSSNGPTTPPHGPHTTFLPPTSPAPSTSS. Positions 19-35 are enriched in low complexity; sequence PHTTFLPPTSPAPSTSS. Positions 200, 203, 276, and 282 each coordinate Zn(2+). The segment at 200–282 is zinc finger 1; that stretch reads CNLCAIISIC…FHLHFFINRC (83 aa). Positions 401–430 are disordered; sequence IEEEEDEEGGEKGGDDPGRHNGGGTSGGFS. Residues 410–419 are compositionally biased toward basic and acidic residues; the sequence is GEKGGDDPGR. Residues C459, C462, H567, and C574 each coordinate Zn(2+). Positions 459–574 are zinc finger 2; that stretch reads CLLCELMACS…YKHFFCDPQC (116 aa).

It belongs to the herpesviridae UL32 protein family.

The protein resides in the host cytoplasm. The protein localises to the host nucleus. In terms of biological role, plays a role in efficient localization of neo-synthesized capsids to nuclear replication compartments, thereby controlling cleavage and packaging of virus genomic DNA. The protein is Packaging protein UL32 homolog (UL52) of Homo sapiens (Human).